Reading from the N-terminus, the 177-residue chain is Inorganic pyrophosphatase (177 aa).

Residues Lys-34, Arg-48, and Tyr-60 each contribute to the substrate site. Positions 70, 75, and 107 each coordinate Mg(2+). Tyr-144 contacts substrate.

The protein belongs to the PPase family. As to quaternary structure, homohexamer. It depends on Mg(2+) as a cofactor.

The protein resides in the cytoplasm. It catalyses the reaction diphosphate + H2O = 2 phosphate + H(+). Its function is as follows. Catalyzes the hydrolysis of inorganic pyrophosphate (PPi) forming two phosphate ions. The protein is Inorganic pyrophosphatase of Picrophilus torridus (strain ATCC 700027 / DSM 9790 / JCM 10055 / NBRC 100828 / KAW 2/3).